The primary structure comprises 189 residues: HTH-type transcriptional regulator Hpr (189 aa).

In terms of domain architecture, HTH marR-type spans 12 to 156 (ALLYSHKIVQ…ISAIVRRLYG (145 aa)). Positions 62-85 (ISEIAKYGVMHVSTAFNFSKKLED) form a DNA-binding region, H-T-H motif.

In terms of assembly, homodimer.

Functionally, negative regulator of protease production and sporulation. This Exiguobacterium sibiricum (strain DSM 17290 / CCUG 55495 / CIP 109462 / JCM 13490 / 255-15) protein is HTH-type transcriptional regulator Hpr.